The sequence spans 719 residues: Polyphosphate kinase (719 aa).

ATP is bound at residue asparagine 47. Arginine 377 and arginine 407 together coordinate Mg(2+). Residue histidine 437 is the Phosphohistidine intermediate of the active site. ATP is bound by residues tyrosine 470, arginine 566, and histidine 594.

Belongs to the polyphosphate kinase 1 (PPK1) family. Mg(2+) serves as cofactor. Post-translationally, an intermediate of this reaction is the autophosphorylated ppk in which a phosphate is covalently linked to a histidine residue through a N-P bond.

It catalyses the reaction [phosphate](n) + ATP = [phosphate](n+1) + ADP. Its function is as follows. Catalyzes the reversible transfer of the terminal phosphate of ATP to form a long-chain polyphosphate (polyP). The sequence is that of Polyphosphate kinase from Exiguobacterium sibiricum (strain DSM 17290 / CCUG 55495 / CIP 109462 / JCM 13490 / 255-15).